Reading from the N-terminus, the 291-residue chain is Tyrosine recombinase XerA (291 aa).

The Core-binding (CB) domain occupies Pro-9–Asn-102. Positions Lys-115 to Leu-279 constitute a Tyr recombinase domain. Catalysis depends on residues Arg-150, Lys-175, His-231, Arg-234, and His-257. Tyr-266 (O-(3'-phospho-DNA)-tyrosine intermediate) is an active-site residue.

It belongs to the 'phage' integrase family. XerA subfamily.

It localises to the cytoplasm. Functionally, site-specific tyrosine recombinase, which acts by catalyzing the cutting and rejoining of the recombining DNA molecules. Probably involved in the resolution of chromosome dimers. Binds to the dif site. In Saccharolobus solfataricus (strain ATCC 35092 / DSM 1617 / JCM 11322 / P2) (Sulfolobus solfataricus), this protein is Tyrosine recombinase XerA.